Reading from the N-terminus, the 307-residue chain is UAP56-interacting factor (307 aa).

The span at 1-25 (MSGFGAAALLSGSSAAAGTRSGSSD) shows a compositional bias: low complexity. Disordered regions lie at residues 1-28 (MSGFGAAALLSGSSAAAGTRSGSSDSLE) and 41-85 (NKKE…KNHL). Residues 26–44 (SLEKIDMSLDDIIKLNKKE) carry the UAP56-binding motif motif. Residues 57-78 (LQQNRTQQFRTPGSKWGIQQQK) are compositionally biased toward polar residues.

The protein belongs to the UIF family. As to expression, widely expressed.

The protein localises to the nucleus. It is found in the nucleoplasm. Its subcellular location is the nucleus speckle. Functionally, required for mRNA export from the nucleus to the cytoplasm. Acts as an adapter that uses the DDX39B/UAP56-NFX1 pathway to ensure efficient mRNA export and delivering to the nuclear pore. This chain is UAP56-interacting factor (FYTTD1), found in Gallus gallus (Chicken).